The chain runs to 583 residues: Ankyrin repeat and SOCS box protein 15 (583 aa).

11 ANK repeats span residues 75 to 104 (KGWF…KTLW), 110 to 139 (DGET…WPNT), 143 to 172 (KGET…SLDQ), 176 to 205 (KRWS…NVHL), 209 to 238 (FGVT…DVFA), 242 to 271 (DGAS…SGNV), 275 to 304 (AGHL…KHAI), 307 to 336 (SGLT…DVNA), 349 to 378 (ERKT…DPNL), 379 to 408 (DPLN…NVNC), and 416 to 444 (TRFP…QVEL). The 56-residue stretch at 524 to 579 (WPEIRQIIENPCSLKHLCRLKIRRVMGLQRLCQPASIQMLPLPAAMRRYLLFKEFD) folds into the SOCS box domain.

It belongs to the ankyrin SOCS box (ASB) family.

The protein operates within protein modification; protein ubiquitination. In terms of biological role, may be a substrate-recognition component of a SCF-like ECS (Elongin-Cullin-SOCS-box protein) E3 ubiquitin-protein ligase complex which mediates the ubiquitination and subsequent proteasomal degradation of target proteins. The chain is Ankyrin repeat and SOCS box protein 15 (Asb15) from Mus musculus (Mouse).